Reading from the N-terminus, the 452-residue chain is 3-phosphoshikimate 1-carboxyvinyltransferase (452 aa).

The span at 1-17 (MSHAAAAKPATARKSQA) shows a compositional bias: low complexity. The interval 1 to 26 (MSHAAAAKPATARKSQALSGTARVPG) is disordered. Positions 28, 29, and 33 each coordinate 3-phosphoshikimate. K28 contributes to the phosphoenolpyruvate binding site. 2 residues coordinate phosphoenolpyruvate: G100 and R128. Positions 174, 176, 327, and 354 each coordinate 3-phosphoshikimate. Q176 contributes to the phosphoenolpyruvate binding site. The active-site Proton acceptor is D327. Phosphoenolpyruvate is bound by residues R358 and R409.

This sequence belongs to the EPSP synthase family. In terms of assembly, monomer.

It is found in the cytoplasm. It carries out the reaction 3-phosphoshikimate + phosphoenolpyruvate = 5-O-(1-carboxyvinyl)-3-phosphoshikimate + phosphate. It functions in the pathway metabolic intermediate biosynthesis; chorismate biosynthesis; chorismate from D-erythrose 4-phosphate and phosphoenolpyruvate: step 6/7. Functionally, catalyzes the transfer of the enolpyruvyl moiety of phosphoenolpyruvate (PEP) to the 5-hydroxyl of shikimate-3-phosphate (S3P) to produce enolpyruvyl shikimate-3-phosphate and inorganic phosphate. In Mesorhizobium japonicum (strain LMG 29417 / CECT 9101 / MAFF 303099) (Mesorhizobium loti (strain MAFF 303099)), this protein is 3-phosphoshikimate 1-carboxyvinyltransferase.